A 104-amino-acid chain; its full sequence is MFAVIKTGGKQYRVAANDVLTIEKLEAEAGAIVEFTEILVVGVGADATIGAPFVAGATVKAEVVEHNRGKKVIAFKKRRRQNSKRSRGHRQHHTVVRITDIVAA.

It belongs to the bacterial ribosomal protein bL21 family. In terms of assembly, part of the 50S ribosomal subunit. Contacts protein L20.

This protein binds to 23S rRNA in the presence of protein L20. The sequence is that of Large ribosomal subunit protein bL21 from Allorhizobium ampelinum (strain ATCC BAA-846 / DSM 112012 / S4) (Agrobacterium vitis (strain S4)).